A 641-amino-acid chain; its full sequence is MDKTLSREEAKQLMQLLCLDMSCWGNLPLMRRQYLVKCKEYHPDKGGNEESMKLLNSLYLKLQDSVSSVHDLNEEEDNIWQSSQIPTYGTPDWDEWWSQFNTYWEEELRCNESMPSSPKRSAPEEEPSCSQATPPKKKHAFDASLEFPKELLEFVSHAVFSNKCITCFVVHTTREKGEVLYKKLLQKYQCSFISKHAFYNTVLIFFLTPHKHRVSAINNFCKGHCTVSFLFCKGVNNPYGLYSRMCRQPFNLCEENIPGGLKENEFNPEDLFGEPKEPSLSWNQIANFALEFDIDDVYYLLGSYIRFATKPEECEKCSKNDDATHKRVHVQNHENAVLLQESKSQKNACTQAIDRVIAERRYNCLTLTRKKLLTKRFKKLFNEMDKIVVGERKILLYMASIAWYTGLNKKIDELVVRFLKLIVDNKPKHRYWLFKGPINSGKTTLATALLNLCGGKALNINIPSEKLPFELGVALDQYMVVFEDVKGQIGIEKQLPSGNGVNNLDNLRDYLDGCVEVNLEKKHVNKRSQIFPPGIVTMNEYCIPETVAVRFEKTVMFTIKRNLRESLEKTPQLLSQRILHSGIAMLLLLIWYRPVSDFDEEIQSNVVYWKEVLDNYIGLTEFATMQMNVTNGKNILEKWFE.

The residue at position 1 (methionine 1) is an N-acetylmethionine; by host. The 69-residue stretch at 12–80 folds into the J domain; sequence QLMQLLCLDM…DLNEEEDNIW (69 aa). The short motif at 108–112 is the LXCXE motif element; sequence LRCNE. The interval 114 to 136 is disordered; it reads MPSSPKRSAPEEEPSCSQATPPK. Serine 117 is subject to Phosphoserine; by host. Phosphothreonine; by host is present on threonine 133. A Nuclear localization signal motif is present at residues 134–141; sequence PPKKKHAF. The T-ag OBD DNA-binding region spans 148-263; it reads PKELLEFVSH…EENIPGGLKE (116 aa). The segment at 277–369 adopts a T-ag D1-type zinc-finger fold; sequence EPSLSWNQIA…RRYNCLTLTR (93 aa). Zn(2+) contacts are provided by cysteine 314, cysteine 317, histidine 325, and histidine 329. An SF3 helicase domain is found at 410–572; it reads KIDELVVRFL…LRESLEKTPQ (163 aa). 436–443 provides a ligand contact to ATP; it reads GPINSGKT.

Forms homohexamers in the presence of ATP. Interacts with host HDAC1. Interacts (via LXCXE domain) with host RB1; the interaction induces the aberrant dissociation of RB1-E2F1 complex thereby disrupting RB1's activity. Interacts (via LXCXE domain) with host pRB-related proteins RBL1 and RBL2. Interacts (via C-terminus) with host TOP1 and POLA1 allowing DNA replication. Interacts with host TP53, inhibiting TP53 binding to DNA. Interacts with host preinitiation complex components TBP, TFIIA and TFIID to regulate transcription initiation. The cofactor is Mg(2+). Post-translationally, phosphorylated on both serine and threonine residues. Small t antigen inhibits the dephosphorylation by the AC form of PP2A. In terms of processing, O-Glycosylated near the C-terminal region. Acetylated by CBP in a TP53-dependent manner.

The protein resides in the host nucleus. The enzyme catalyses Couples ATP hydrolysis with the unwinding of duplex DNA by translocating in the 3'-5' direction.. It carries out the reaction ATP + H2O = ADP + phosphate + H(+). In terms of biological role, isoform large T antigen is a key early protein essential for both driving viral replication and inducing cellular transformation. Plays a role in viral genome replication by driving entry of quiescent cells into the cell cycle and by autoregulating the synthesis of viral early mRNA. Displays highly oncogenic activities by corrupting the host cellular checkpoint mechanisms that guard cell division and the transcription, replication, and repair of DNA. Participates in the modulation of cellular gene expression preceeding viral DNA replication. This step involves binding to host key cell cycle regulators retinoblastoma protein RB1/pRb and TP53. Induces the disassembly of host E2F1 transcription factors from RB1, thus promoting transcriptional activation of E2F1-regulated S-phase genes. Inhibits host TP53 binding to DNA, abrogating the ability of TP53 to stimulate gene expression. Plays the role of a TFIID-associated factor (TAF) in transcription initiation for all three RNA polymerases, by stabilizing the TBP-TFIIA complex on promoters. Initiates viral DNA replication and unwinding via interactions with the viral origin of replication. Binds two adjacent sites in the SV40 origin. The replication fork movement is facilitated by Large T antigen helicase activity. Has processive 3'-5' DNA helicase activity which requires a short 3' single-stranded region and ATP. Activates the transcription of viral late mRNA, through host TBP and TFIIA stabilization. Interferes with histone deacetylation mediated by HDAC1, leading to activation of transcription. In KI polyomavirus (isolate Stockholm 60) (KIPyV), this protein is Large T antigen.